The following is a 1424-amino-acid chain: MNKLVGLLVSSLFLASILIGIAPAITTTALTPPVSAGGIQAYLLTGSGAPASGLVLFVVNVSNIQVSSSNVTNVISTVVSNIQINAKTENAQTGATTGSVTVRFPTSGYNAYYDSVDKVVFVVVSFLYPYTTTSVNIPLSYLSKYLPGLLTAQPYDETGAQVTSVSSTPFGSLIDTSTGQQILGTNPVLTSYNSYTTQANTNMQEGVVSGTLTSFTLGGQSFSGSTVPVILYAPFIFSNSPYQAGLYNPMQVNGNLGSLSSEAYYHPVIWGRALINTTLIDTYASGSVPFTFQLNYSVPGPLTINMAQLAWIASINNLPTSFTYLSYKFSNGYESFLGIISNSTQLTAGALTINPSGNFTINGKKFYVYLLVVGSTNSTTPVEYVTKLVVEYPSSTNFLPQGVTVTTSSNKYTLPVYEIGGPAGTTITLTGNWYSTPYTVQITVGSTPTLTNYVSQILLKAVAYEGINVSTTQSPYYSTAILSTPPSEISITGSSTITAQGKLTATSASATVNLLTNATLTYENIPLTQYSFNGIIVTPGYAAINGTTAMAYVIGALYNKTSDYVLSFAGSQEPMQVMNNNLTEVTTLAPFGLTLLAPSVPATETGTSPLQLEFFTVPSTSYIALVDFGLWGNLTSVTVSAYDTVNNKLSVNLGYFYGIVIPPSISTAPYNYQNFICPNNYVTVTIYDPDAVLDPYPSGSFTTSSLPLKYGNMNITGAVIFPGSSVYNPSGVFGYSNFNKGAAVTTFTYTAQSGPFSPVALTGNTNYLSQYADNNPTDNYYFIQTVNGMPVLMGGLSIVASPVSASLPSSTSSPGFMYLLPSAAQVPSPLPGMATPNYNLNIYITYKIDGATVGNNMINGLYVASQNTLIYVVPNGSFVGSNIKLTYTTTDYAVLHYFYSTGQYKVFKTVSVPNVTANLYFPSSTTPLYQLSVPLYLSEPYYGSPLPTYIGLGTNGTSLWNSPNYVLFGVSAVQQYLGFIKSISVTLSNGTTVVIPLTTSNMQTLFPQLVGQELQACNGTFQFGISITGLEKLLNLNVQQLNNSILSVTYHDYVTGETLTATTKLVALSTLSLVAKGAGVVEFLLTAYPYTGNITFAPPWFIAENVVKQPFMTYSDLQFAKTNPSAILSLSTVNITVVGLGGKASVYYNSTSGQTVITNIYGQTVATLSGNVLPTLTELAAGNGTFTGSLQFTIVPNNTVVQIPSSLTKTSFAVYTNGSLAIVLNGKAYSLGPAGLFLLPFVTYTGSAIGANATAIITVSDGVGTSTTQVPITAENFTPIRLAPFQVPAQVPLPNAPKLKYEYNGSIVITPQQQVLKIYVTSILPYPQEFQIQAFVYEASQFNVHTGSPTAAPVYFSYSAVRAYPALGIGTSVPNLLVYVQLQGISNLPAGKYVIVLSAVPFAGGPVLSEYPAQLIFTNVTLTQ.

The first 24 residues, Met1 to Ala24, serve as a signal peptide directing secretion. Residues Asn60, Asn70, Asn276, Asn295, Asn342, Asn358, Asn377, Asn468, Asn517, Asn545, Asn559, Asn581, Asn633, Asn714, Asn875, Asn914, Asn955, Asn989, Asn1018, Asn1042, Asn1093, Asn1134, Asn1197, Asn1217, Asn1252, Asn1276, Asn1304, and Asn1419 are each glycosylated (N-linked (GlcNAc...) asparagine).

Belongs to the Sulfolobales SlaA family. The mushroom-shaped unit cells of the Sulfolobales' S-layers may consist of three SlaB subunits and six SlaA subunits. Glycosylated. C-terminal glycosylation sites are modified with a heterogeneous family of glycans, with the largest having a composition Glc(1)Man(2)GlcNAc(2) plus 6-sulfoquinovose (QuiS).

Its subcellular location is the secreted. It localises to the cell wall. The protein localises to the S-layer. Functionally, S-layer large protein. May form the highly ordered outer sheath. This chain is S-layer protein A, found in Sulfolobus acidocaldarius (strain ATCC 33909 / DSM 639 / JCM 8929 / NBRC 15157 / NCIMB 11770).